Consider the following 160-residue polypeptide: Anaerobic nitrite reductase HBII (160 aa).

In terms of domain architecture, Globin spans 8–157 (GFTEEQEALV…LVAAIKLEMK (150 aa)). Residues 41–45 (EIAPS) carry the Homodimerization motif. 6 residues coordinate heme b: S51, K65, H69, K99, S103, and H104. The short motif at 111–123 (DEHFEVTKFALLE) is the Homodimerization element.

Belongs to the plant globin family. In terms of assembly, homodimer. The cofactor is heme b.

It is found in the cytoplasm. The protein resides in the nucleus. The catalysed reaction is Fe(III)-heme b-[protein] + nitric oxide + H2O = Fe(II)-heme b-[protein] + nitrite + 2 H(+). Functionally, phytoglobin that reduces nitrite to nitric oxide (NO) under anoxic conditions (e.g. during flooding or in waterlogged soil) and upon root nodulation. Required for general plant development and during nodulation, especially for the onset of symbiosis. Monitors nitric oxide (NO) levels during early phase of the nitrogen-fixing symbiosis and buffers oxygen in functioning nodules. May not function as an oxygen storage or transport protein. Has an unusually high affinity for O(2) through a hexacoordinate heme iron because of a very low dissociation constant. This Casuarina glauca (Swamp oak) protein is Anaerobic nitrite reductase HBII.